Reading from the N-terminus, the 216-residue chain is Probable inactive E3 ubiquitin-protein ligase SINAT6 (216 aa).

The SIAH-type zinc-finger motif lies at 5–74; it reads INDLQVESRV…LLLHLRNDHN (70 aa).

Belongs to the SINA (Seven in absentia) family. Homodimer. Interacts with SINAT1, SINAT2, SINAT3, SINAT4 and SINAT5. Interacts with ATG6 and TRAF1A. In terms of tissue distribution, expressed in roots, rosette leaves, cauline leaves, guard cells and flowers.

Its subcellular location is the cytoplasm. It is found in the nucleus. In terms of biological role, probable inactive E3 ubiquitin-protein ligase that plays a role in regulation of autophagy. Upon starvation, involved in maintaining ATG6 homeostasis by competitively associating with ATG6, a component of the autophagosome complex. Acts as a positive regulator of drought stress response. Functions as a positive regulator of abscisic acid-mediated stomatal closure. The chain is Probable inactive E3 ubiquitin-protein ligase SINAT6 from Arabidopsis thaliana (Mouse-ear cress).